A 264-amino-acid chain; its full sequence is Glucosamine-6-phosphate deaminase (264 aa).

Residue D72 is the Proton acceptor; for enolization step of the active site. D141 (for ring-opening step) is an active-site residue. Residue H143 is the Proton acceptor; for ring-opening step of the active site. E148 functions as the For ring-opening step in the catalytic mechanism.

Belongs to the glucosamine/galactosamine-6-phosphate isomerase family. NagB subfamily. In terms of assembly, homohexamer.

It carries out the reaction alpha-D-glucosamine 6-phosphate + H2O = beta-D-fructose 6-phosphate + NH4(+). Its pathway is amino-sugar metabolism; N-acetylneuraminate degradation; D-fructose 6-phosphate from N-acetylneuraminate: step 5/5. With respect to regulation, allosterically activated by N-acetylglucosamine 6-phosphate (GlcNAc6P). Its function is as follows. Catalyzes the reversible isomerization-deamination of glucosamine 6-phosphate (GlcN6P) to form fructose 6-phosphate (Fru6P) and ammonium ion. This is Glucosamine-6-phosphate deaminase from Glaesserella parasuis serovar 5 (strain SH0165) (Haemophilus parasuis).